Consider the following 303-residue polypeptide: 2-(5''-triphosphoribosyl)-3'-dephosphocoenzyme-A synthase (303 aa).

Belongs to the CitG/MdcB family.

It catalyses the reaction 3'-dephospho-CoA + ATP = 2'-(5''-triphospho-alpha-D-ribosyl)-3'-dephospho-CoA + adenine. Functionally, catalyzes the formation of 2-(5''-triphosphoribosyl)-3'-dephosphocoenzyme-A, the precursor of the prosthetic group of the holo-acyl carrier protein (gamma chain) of citrate lyase, from ATP and dephospho-CoA. The chain is 2-(5''-triphosphoribosyl)-3'-dephosphocoenzyme-A synthase from Escherichia fergusonii (strain ATCC 35469 / DSM 13698 / CCUG 18766 / IAM 14443 / JCM 21226 / LMG 7866 / NBRC 102419 / NCTC 12128 / CDC 0568-73).